We begin with the raw amino-acid sequence, 493 residues long: Glycerol kinase (493 aa).

An ADP-binding site is contributed by Thr12. Residues Thr12, Thr13, and Ser14 each contribute to the ATP site. Thr12 is a binding site for sn-glycerol 3-phosphate. Arg16 serves as a coordination point for ADP. Sn-glycerol 3-phosphate contacts are provided by Arg82, Glu83, Tyr132, and Asp239. The glycerol site is built by Arg82, Glu83, Tyr132, Asp239, and Gln240. ADP is bound by residues Thr261 and Gly303. Thr261, Gly303, Gln307, and Gly402 together coordinate ATP. Residues Gly402 and Asn406 each coordinate ADP.

Belongs to the FGGY kinase family.

It catalyses the reaction glycerol + ATP = sn-glycerol 3-phosphate + ADP + H(+). It functions in the pathway polyol metabolism; glycerol degradation via glycerol kinase pathway; sn-glycerol 3-phosphate from glycerol: step 1/1. Key enzyme in the regulation of glycerol uptake and metabolism. Catalyzes the phosphorylation of glycerol to yield sn-glycerol 3-phosphate. The chain is Glycerol kinase from Thermococcus gammatolerans (strain DSM 15229 / JCM 11827 / EJ3).